The chain runs to 157 residues: S-ribosylhomocysteine lyase (157 aa).

The Fe cation site is built by H54, H58, and C124.

Belongs to the LuxS family. In terms of assembly, homodimer. It depends on Fe cation as a cofactor.

It catalyses the reaction S-(5-deoxy-D-ribos-5-yl)-L-homocysteine = (S)-4,5-dihydroxypentane-2,3-dione + L-homocysteine. In terms of biological role, involved in the synthesis of autoinducer 2 (AI-2) which is secreted by bacteria and is used to communicate both the cell density and the metabolic potential of the environment. The regulation of gene expression in response to changes in cell density is called quorum sensing. Catalyzes the transformation of S-ribosylhomocysteine (RHC) to homocysteine (HC) and 4,5-dihydroxy-2,3-pentadione (DPD). This chain is S-ribosylhomocysteine lyase, found in Lactobacillus helveticus (strain DPC 4571).